Reading from the N-terminus, the 355-residue chain is Histidine biosynthesis bifunctional protein HisB (355 aa).

The histidinol-phosphatase stretch occupies residues 1-166 (MKQKILFIDR…DITKEIIKRN (166 aa)). Asp-9 (nucleophile) is an active-site residue. Positions 9 and 11 each coordinate Mg(2+). The Proton donor role is filled by Asp-11. Residues Cys-93, His-95, Cys-101, and Cys-103 each coordinate Zn(2+). Residue Asp-130 coordinates Mg(2+). Positions 167-355 (RYREVIRETK…NTLPTSKGIL (189 aa)) are imidazoleglycerol-phosphate dehydratase.

It in the N-terminal section; belongs to the histidinol-phosphatase family. In the C-terminal section; belongs to the imidazoleglycerol-phosphate dehydratase family. Mg(2+) is required as a cofactor. Requires Zn(2+) as cofactor.

The protein resides in the cytoplasm. The catalysed reaction is D-erythro-1-(imidazol-4-yl)glycerol 3-phosphate = 3-(imidazol-4-yl)-2-oxopropyl phosphate + H2O. The enzyme catalyses L-histidinol phosphate + H2O = L-histidinol + phosphate. It participates in amino-acid biosynthesis; L-histidine biosynthesis; L-histidine from 5-phospho-alpha-D-ribose 1-diphosphate: step 6/9. Its pathway is amino-acid biosynthesis; L-histidine biosynthesis; L-histidine from 5-phospho-alpha-D-ribose 1-diphosphate: step 8/9. The sequence is that of Histidine biosynthesis bifunctional protein HisB from Buchnera aphidicola subsp. Schizaphis graminum (strain Sg).